The primary structure comprises 208 residues: Small ribosomal subunit protein uS4 (208 aa).

In terms of domain architecture, S4 RNA-binding spans 97–158 (TRLDNVIYRM…RAQKYLCVQE (62 aa)).

The protein belongs to the universal ribosomal protein uS4 family. Part of the 30S ribosomal subunit. Contacts protein S5. The interaction surface between S4 and S5 is involved in control of translational fidelity.

In terms of biological role, one of the primary rRNA binding proteins, it binds directly to 16S rRNA where it nucleates assembly of the body of the 30S subunit. Functionally, with S5 and S12 plays an important role in translational accuracy. The sequence is that of Small ribosomal subunit protein uS4 from Xylella fastidiosa (strain M23).